The following is a 522-amino-acid chain: Glucans biosynthesis protein G (522 aa).

An N-terminal signal peptide occupies residues 1–33 (MLVNILSKKPRAASVRWLGATVLFTLLTSPAWA).

The protein belongs to the OpgD/OpgG family.

Its subcellular location is the periplasm. It functions in the pathway glycan metabolism; osmoregulated periplasmic glucan (OPG) biosynthesis. Its function is as follows. Involved in the biosynthesis of osmoregulated periplasmic glucans (OPGs). The chain is Glucans biosynthesis protein G from Serratia proteamaculans (strain 568).